Here is a 381-residue protein sequence, read N- to C-terminus: Chaperone protein DnaJ 1 (381 aa).

One can recognise a J domain in the interval 4–68 (DYYGLLGVSR…EKRRIVDLGG (65 aa)). A CR-type zinc finger spans residues 132–214 (GVTKQVTVDT…CMGDGRVRAR (83 aa)). Residues Cys-145, Cys-148, Cys-162, Cys-165, Cys-188, Cys-191, Cys-202, and Cys-205 each contribute to the Zn(2+) site. CXXCXGXG motif repeat units lie at residues 145–152 (CDRCHGKG), 162–169 (CDTCGGRG), 188–195 (CPTCRGVG), and 202–209 (CHQCMGDG).

Belongs to the DnaJ family. In terms of assembly, homodimer. The cofactor is Zn(2+).

The protein resides in the cytoplasm. Participates actively in the response to hyperosmotic and heat shock by preventing the aggregation of stress-denatured proteins and by disaggregating proteins, also in an autonomous, DnaK-independent fashion. Unfolded proteins bind initially to DnaJ; upon interaction with the DnaJ-bound protein, DnaK hydrolyzes its bound ATP, resulting in the formation of a stable complex. GrpE releases ADP from DnaK; ATP binding to DnaK triggers the release of the substrate protein, thus completing the reaction cycle. Several rounds of ATP-dependent interactions between DnaJ, DnaK and GrpE are required for fully efficient folding. Also involved, together with DnaK and GrpE, in the DNA replication of plasmids through activation of initiation proteins. This is Chaperone protein DnaJ 1 from Mycolicibacterium paratuberculosis (strain ATCC BAA-968 / K-10) (Mycobacterium paratuberculosis).